The sequence spans 135 residues: Endocuticle structural glycoprotein SgAbd-2 (135 aa).

Glutamine 1 bears the Pyrrolidone carboxylic acid mark. 2 O-linked (HexNAc...) threonine glycosylation sites follow: threonine 11 and threonine 100. One can recognise a Chitin-binding type R&amp;R domain in the interval 32–102; it reads DGSYAYSYQT…AEGAHLPTPP (71 aa).

Functionally, component of the abdominal endocuticle. This chain is Endocuticle structural glycoprotein SgAbd-2, found in Schistocerca gregaria (Desert locust).